The sequence spans 386 residues: Succinate--CoA ligase [ADP-forming] subunit beta (386 aa).

One can recognise an ATP-grasp domain in the interval 9-244 (KELLKQFGVP…LDEEDPAEIE (236 aa)). ATP is bound by residues Lys46, 53-55 (GRG), Glu99, Ala102, and Glu107. Residues Asn199 and Asp213 each coordinate Mg(2+). Substrate-binding positions include Asn264 and 321–323 (GIM).

It belongs to the succinate/malate CoA ligase beta subunit family. As to quaternary structure, heterotetramer of two alpha and two beta subunits. The cofactor is Mg(2+).

The catalysed reaction is succinate + ATP + CoA = succinyl-CoA + ADP + phosphate. It carries out the reaction GTP + succinate + CoA = succinyl-CoA + GDP + phosphate. Its pathway is carbohydrate metabolism; tricarboxylic acid cycle; succinate from succinyl-CoA (ligase route): step 1/1. Succinyl-CoA synthetase functions in the citric acid cycle (TCA), coupling the hydrolysis of succinyl-CoA to the synthesis of either ATP or GTP and thus represents the only step of substrate-level phosphorylation in the TCA. The beta subunit provides nucleotide specificity of the enzyme and binds the substrate succinate, while the binding sites for coenzyme A and phosphate are found in the alpha subunit. This is Succinate--CoA ligase [ADP-forming] subunit beta from Bordetella avium (strain 197N).